We begin with the raw amino-acid sequence, 502 residues long: Probable cytochrome P450 554A1 (502 aa).

A helical membrane pass occupies residues 3–20 (LLLFIFFLILFYYSVKYY). Cysteine 448 contacts heme.

Belongs to the cytochrome P450 family. Heme is required as a cofactor.

The protein resides in the membrane. This Dictyostelium discoideum (Social amoeba) protein is Probable cytochrome P450 554A1 (cyp554A1).